A 192-amino-acid polypeptide reads, in one-letter code: Adenylate kinase (192 aa).

10–15 lines the ATP pocket; that stretch reads GAGKGT. Residues 30–59 are NMP; sequence STGDMLRTAVAQATEVGKRAKAVMDAGQLV. AMP contacts are provided by residues threonine 31, arginine 36, 57–59, 85–88, and glutamine 92; these read QLV and GYPR. The interval 126–142 is LID; it reads NRVTETVAAGGTVRSDD. Residue arginine 127 coordinates ATP. The AMP site is built by arginine 139 and arginine 150. Residue alanine 178 participates in ATP binding.

The protein belongs to the adenylate kinase family. In terms of assembly, monomer.

The protein resides in the cytoplasm. The catalysed reaction is AMP + ATP = 2 ADP. The protein operates within purine metabolism; AMP biosynthesis via salvage pathway; AMP from ADP: step 1/1. Catalyzes the reversible transfer of the terminal phosphate group between ATP and AMP. Plays an important role in cellular energy homeostasis and in adenine nucleotide metabolism. This is Adenylate kinase from Rhizobium meliloti (strain 1021) (Ensifer meliloti).